We begin with the raw amino-acid sequence, 585 residues long: Zinc finger protein C11D3.17 (585 aa).

C2H2-type zinc fingers lie at residues 31 to 53 (FPCD…KACH) and 59 to 82 (IPCP…QRFH). The residue at position 553 (Thr-553) is a Phosphothreonine.

The protein localises to the nucleus. The polypeptide is Zinc finger protein C11D3.17 (Schizosaccharomyces pombe (strain 972 / ATCC 24843) (Fission yeast)).